The chain runs to 221 residues: Hypoxanthine-guanine phosphoribosyltransferase (221 aa).

S2 is subject to N-acetylserine. GMP-binding positions include K85, 110 to 118 (DEVDDTRTT), K159, and 188 to 194 (WYAYPWE). Catalysis depends on D114, which acts as the Proton acceptor.

The protein belongs to the purine/pyrimidine phosphoribosyltransferase family. In terms of assembly, dimer. Requires Mg(2+) as cofactor.

The protein resides in the cytoplasm. Its subcellular location is the nucleus. It catalyses the reaction IMP + diphosphate = hypoxanthine + 5-phospho-alpha-D-ribose 1-diphosphate. The catalysed reaction is GMP + diphosphate = guanine + 5-phospho-alpha-D-ribose 1-diphosphate. It functions in the pathway purine metabolism; IMP biosynthesis via salvage pathway; IMP from hypoxanthine: step 1/1. Subject to feedback inhibition by GMP. Its function is as follows. Converts guanine to guanosine monophosphate, and hypoxanthine to inosine monophosphate. Transfers the 5-phosphoribosyl group from 5-phosphoribosylpyrophosphate onto the purine. Plays a central role in the generation of purine nucleotides through the purine salvage pathway. This Saccharomyces cerevisiae (strain ATCC 204508 / S288c) (Baker's yeast) protein is Hypoxanthine-guanine phosphoribosyltransferase (HPT1).